The chain runs to 208 residues: Ribosomal RNA small subunit methyltransferase G (208 aa).

Residues Gly76, Leu81, 127 to 128 (VE), and Arg142 contribute to the S-adenosyl-L-methionine site.

This sequence belongs to the methyltransferase superfamily. RNA methyltransferase RsmG family.

It localises to the cytoplasm. It carries out the reaction guanosine(527) in 16S rRNA + S-adenosyl-L-methionine = N(7)-methylguanosine(527) in 16S rRNA + S-adenosyl-L-homocysteine. Its function is as follows. Specifically methylates the N7 position of guanine in position 527 of 16S rRNA. This chain is Ribosomal RNA small subunit methyltransferase G, found in Legionella pneumophila (strain Lens).